The sequence spans 436 residues: UDP-N-acetylmuramate--L-alanine ligase (436 aa).

ATP is bound at residue 108–114 (GAHGKTS).

Belongs to the MurCDEF family.

Its subcellular location is the cytoplasm. It catalyses the reaction UDP-N-acetyl-alpha-D-muramate + L-alanine + ATP = UDP-N-acetyl-alpha-D-muramoyl-L-alanine + ADP + phosphate + H(+). It participates in cell wall biogenesis; peptidoglycan biosynthesis. In terms of biological role, cell wall formation. This is UDP-N-acetylmuramate--L-alanine ligase from Bacillus cytotoxicus (strain DSM 22905 / CIP 110041 / 391-98 / NVH 391-98).